Consider the following 260-residue polypeptide: Hydroxyethylthiazole kinase 1 (260 aa).

Residue Met-39 coordinates substrate. ATP-binding residues include Arg-115 and Thr-160. Substrate is bound at residue Gly-187.

Belongs to the Thz kinase family. It depends on Mg(2+) as a cofactor.

The enzyme catalyses 5-(2-hydroxyethyl)-4-methylthiazole + ATP = 4-methyl-5-(2-phosphooxyethyl)-thiazole + ADP + H(+). The protein operates within cofactor biosynthesis; thiamine diphosphate biosynthesis; 4-methyl-5-(2-phosphoethyl)-thiazole from 5-(2-hydroxyethyl)-4-methylthiazole: step 1/1. Functionally, catalyzes the phosphorylation of the hydroxyl group of 4-methyl-5-beta-hydroxyethylthiazole (THZ). This is Hydroxyethylthiazole kinase 1 from Streptococcus pneumoniae serotype 19F (strain G54).